Consider the following 305-residue polypeptide: Coiled-coil domain-containing protein 50 (305 aa).

An N-acetylalanine modification is found at A2. Residue S5 is modified to Phosphoserine. Residues 86-130 (EIAQEIQEKLTIEAERRRIQEKKDEDIARLLQEKELQEEKRRKKH) adopt a coiled-coil conformation. Disordered regions lie at residues 122–142 (QEEK…VFGD) and 218–305 (KKAK…HNKQ). Basic and acidic residues-rich tracts occupy residues 218-239 (KKAK…ECKL) and 247-263 (KSKE…DRPS). A compositionally biased stretch (polar residues) spans 279–305 (THFTNQHSTTWHLPKSESSQKGFHNKQ).

As to quaternary structure, interacts with RNF126. In terms of processing, phosphorylated on tyrosine residues. As to expression, widely expressed.

It localises to the cytoplasm. Its function is as follows. Involved in EGFR signaling. The polypeptide is Coiled-coil domain-containing protein 50 (Ccdc50) (Mus musculus (Mouse)).